A 277-amino-acid polypeptide reads, in one-letter code: Transport and Golgi organization protein 11 (277 aa).

At 1–256 (MVTPQSPTPM…NNEQRTQREK (256 aa)) the chain is on the cytoplasmic side. 2 disordered regions span residues 124 to 148 (HFPSASEESSPIRANGHHLYGNDLD) and 167 to 200 (VARMGFQGNDTNSVESDSQLTTGSASKRSQLNQQ). Phosphoserine occurs at positions 127, 129, 132, and 133. Polar residues predominate over residues 174-200 (GNDTNSVESDSQLTTGSASKRSQLNQQ). Residue Thr-177 is modified to Phosphothreonine. Phosphoserine occurs at positions 179, 182, and 190. Phosphothreonine is present on residues Thr-216 and Thr-222. Residues 225-253 (EEILYLRRQLAKLNRRVLNIEINNEQRTQ) adopt a coiled-coil conformation. A helical; Anchor for type IV membrane protein transmembrane segment spans residues 257-274 (IVYCLGLAYFVLKTIFWL). Over 275 to 277 (NRN) the chain is Lumenal.

Belongs to the Tango11 family.

Its subcellular location is the endoplasmic reticulum membrane. It localises to the mitochondrion outer membrane. The protein resides in the peroxisome. In terms of biological role, may play a role in mitochondrial and peroxisomal fission. This is Transport and Golgi organization protein 11 (Tango11) from Drosophila melanogaster (Fruit fly).